Reading from the N-terminus, the 711-residue chain is Ecdysone-inducible protein E75 (711 aa).

Residues 44–120 (TVLCRVCGDK…VGMSRDAVRF (77 aa)) constitute a DNA-binding region (nuclear receptor). 2 NR C4-type zinc fingers span residues 47 to 67 (CRVC…CEGC) and 84 to 108 (CTKN…LKKC). Positions 153–400 (DGPRLLARVV…QQMWVEDEGA (248 aa)) constitute an NR LBD domain. 4 disordered regions span residues 405–432 (SGAD…DCGT), 466–530 (LTVT…DMPV), 559–602 (AMRR…PIRA), and 680–711 (DAPQ…MLPA). Composition is skewed to basic and acidic residues over residues 511 to 521 (SLEEHSDDRRP) and 560 to 572 (MRRD…EARP). Residues 574–590 (RPTPSPQPPHHPHPASP) are compositionally biased toward pro residues. Low complexity-rich tracts occupy residues 591 to 602 (AHPAHSPRPIRA) and 682 to 692 (PQPLNLSKKSP). The span at 693-711 (SPSPPPPPPRSYMPPMLPA) shows a compositional bias: pro residues.

This sequence belongs to the nuclear hormone receptor family. NR1 subfamily.

Its subcellular location is the nucleus. Orphan receptor possibly involved in the regulation of genes in the ecdysteroid cascade. The chain is Ecdysone-inducible protein E75 (E75) from Galleria mellonella (Greater wax moth).